A 242-amino-acid chain; its full sequence is Myb-related protein MYBAS2 (242 aa).

HTH myb-type domains lie at 5–61 (REEI…HPGL) and 62–112 (KRGR…RKKA). Positions 33 to 57 (WDFIAKVSGLNRTGKSCRLRWVNYL) form a DNA-binding region, H-T-H motif. A Bipartite nuclear localization signal 1 motif is present at residues 62 to 65 (KRGR). The H-T-H motif DNA-binding region spans 85–108 (WSRIARRLPGRTDNEIKNYWRTHM). Positions 109–117 (RKKAQERKS) match the Bipartite nuclear localization signal 2 motif. The segment at 110–133 (KKAQERKSNMSPSSSSSSLTYQSC) is disordered. Residues 118–133 (NMSPSSSSSSLTYQSC) are compositionally biased toward low complexity.

The protein resides in the nucleus. Functionally, transcription factor. This Oryza sativa subsp. japonica (Rice) protein is Myb-related protein MYBAS2 (MYBAS2).